A 757-amino-acid chain; its full sequence is Receptor protein kinase-like protein At4g34220 (757 aa).

A signal peptide spans 1–26; sequence MTSNRSNLLFSLVLFHFLFVPTQLQA. LRR repeat units lie at residues 104-126, 128-150, 152-174, 176-198, 199-219, 220-242, and 245-267; these read YLRI…VFNA, ELQS…VNSV, NLQL…ISLL, NLTV…FEAA, QILD…LGGK, SLHY…FAEK, and ANAT…LSLL. The helical transmembrane segment at 339–359 threads the bilayer; that stretch reads IAAITVADIVGLAFIGLLVLY. The 283-residue stretch at 471 to 753 folds into the Protein kinase domain; it reads KASAYILGTT…KELVQVLEKI (283 aa). Position 473 is a phosphoserine (S473). Phosphothreonine is present on T494. Phosphoserine is present on S553. The disordered stretch occupies residues 633–654; sequence ARESHTTGPTSSSPYQPPEWST. A phosphothreonine mark is found at T638 and T639. Residues 638–654 are compositionally biased toward polar residues; that stretch reads TTGPTSSSPYQPPEWST.

The protein belongs to the protein kinase superfamily.

It is found in the membrane. The chain is Receptor protein kinase-like protein At4g34220 from Arabidopsis thaliana (Mouse-ear cress).